We begin with the raw amino-acid sequence, 637 residues long: Choline O-acetyltransferase (637 aa).

The segment covering 1 to 13 (MPVSKREQSKDTG) has biased composition (basic and acidic residues). The segment at 1–20 (MPVSKREQSKDTGDPCALPK) is disordered. The active-site Proton acceptor is histidine 329. CoA contacts are provided by residues 407–419 (GKEFIKRQKMSPD), serine 445, and glutamine 545.

Belongs to the carnitine/choline acetyltransferase family.

It catalyses the reaction choline + acetyl-CoA = acetylcholine + CoA. Catalyzes the reversible synthesis of acetylcholine (ACh) from acetyl CoA and choline at cholinergic synapses. This is Choline O-acetyltransferase (chat) from Danio rerio (Zebrafish).